A 1203-amino-acid polypeptide reads, in one-letter code: DNA-directed RNA polymerase subunit beta (1203 aa).

Residues 1174–1195 (AAQEAKAAFEAEEAEKATKAEA) show a composition bias toward basic and acidic residues. Residues 1174 to 1203 (AAQEAKAAFEAEEAEKATKAEATEEAAEQE) form a disordered region.

The protein belongs to the RNA polymerase beta chain family. The RNAP catalytic core consists of 2 alpha, 1 beta, 1 beta' and 1 omega subunit. When a sigma factor is associated with the core the holoenzyme is formed, which can initiate transcription.

It carries out the reaction RNA(n) + a ribonucleoside 5'-triphosphate = RNA(n+1) + diphosphate. Its function is as follows. DNA-dependent RNA polymerase catalyzes the transcription of DNA into RNA using the four ribonucleoside triphosphates as substrates. The protein is DNA-directed RNA polymerase subunit beta of Streptococcus pneumoniae (strain JJA).